The following is a 73-amino-acid chain: Homeodomain-only protein (73 aa).

Residues 3 to 62 constitute a DNA-binding region (homeobox; degenerate); the sequence is AETASGPTEDQVEILEYNFNKVDKHPDSTTLCLIAAEAGLSEEETQKWFKQRLAKWRRSE.

In terms of assembly, interacts with serum response factor (SRF). Component of a large complex containing histone deacetylases such as HDAC2. Interacts with the acetylated forms of HSPA1A and HSPA1B. Interacts with HSPA8. As to expression, widely expressed. Expressed in the heart, brain, placenta, lung, skeletal and smooth muscles, uterus, urinary bladder, kidney and spleen. Down-regulated in some types of cancer such as lung cancer, choriocarcinoma, head and neck squamous cell carcinoma and oral squamous cell carcinoma.

Its subcellular location is the nucleus. The protein resides in the cytoplasm. Its function is as follows. Atypical homeodomain protein which does not bind DNA and is required to modulate cardiac growth and development. Acts via its interaction with SRF, thereby modulating the expression of SRF-dependent cardiac-specific genes and cardiac development. Prevents SRF-dependent transcription either by inhibiting SRF binding to DNA or by recruiting histone deacetylase (HDAC) proteins that prevent transcription by SRF. Overexpression causes cardiac hypertrophy. May act as a tumor suppressor. Acts as a co-chaperone for HSPA1A and HSPA1B chaperone proteins and assists in chaperone-mediated protein refolding. This is Homeodomain-only protein (HOPX) from Homo sapiens (Human).